The primary structure comprises 383 residues: S-adenosylmethionine synthase (383 aa).

His-15 is an ATP binding site. Asp-17 serves as a coordination point for Mg(2+). A K(+)-binding site is contributed by Glu-43. Residues Glu-56 and Gln-99 each contribute to the L-methionine site. Positions 99–109 (QSPDINQGVDR) are flexible loop. ATP-binding positions include 164-166 (DAK), 230-231 (RF), Asp-239, 245-246 (RK), Ala-262, and Lys-266. Asp-239 serves as a coordination point for L-methionine. Lys-270 lines the L-methionine pocket.

The protein belongs to the AdoMet synthase family. As to quaternary structure, homotetramer; dimer of dimers. It depends on Mg(2+) as a cofactor. Requires K(+) as cofactor.

Its subcellular location is the cytoplasm. The enzyme catalyses L-methionine + ATP + H2O = S-adenosyl-L-methionine + phosphate + diphosphate. The protein operates within amino-acid biosynthesis; S-adenosyl-L-methionine biosynthesis; S-adenosyl-L-methionine from L-methionine: step 1/1. Its function is as follows. Catalyzes the formation of S-adenosylmethionine (AdoMet) from methionine and ATP. The overall synthetic reaction is composed of two sequential steps, AdoMet formation and the subsequent tripolyphosphate hydrolysis which occurs prior to release of AdoMet from the enzyme. This chain is S-adenosylmethionine synthase, found in Shewanella baltica (strain OS223).